A 1029-amino-acid chain; its full sequence is DNA repair protein RAD5A (1029 aa).

Residues 83–104 (SVGANHRVEEENESVNGGGEES) form a disordered region. The Helicase ATP-binding domain occupies 406 to 622 (PSTLQMARGG…YSLLRFLRIE (217 aa)). Position 419–426 (419–426 (DAMGLGKT)) interacts with ATP. Residues 573–576 (DEAH) carry the DEAH box motif. The RING-type zinc finger occupies 794-834 (CPICLEALEDAVLTPCAHRLCRECLLASWRNSTSGLCPVCR). The Helicase C-terminal domain maps to 864–1029 (KITALLEELE…RIEELKMLFT (166 aa)).

Belongs to the SNF2/RAD54 helicase family. RAD16 subfamily.

Its subcellular location is the nucleus. Functions in error-free postreplication DNA repair or DNA-damage tolerance (DTT) pathway. Required for homologous recombination (HR) induced by DNA double-strand break (DSB) in somatic cells. Required for damage-induced DNA repair, independently of MUS81 and RECQL4A. Plays a role in synthesis-dependent strand annealing (SDSA) but not in single-strand annealing (SSA). Possesses double-stranded DNA-dependent ATPase activity. Is able to regress replication forks with preference for forks with a leading strand gap. Is able to catalyze branch migration of Holliday junctions and is unaffected by protein blockades. The polypeptide is DNA repair protein RAD5A (Arabidopsis thaliana (Mouse-ear cress)).